Consider the following 116-residue polypeptide: U16-barytoxin-Tl1c (116 aa).

The first 20 residues, 1-20 (MKTIIVFLSLLVLATKFGDA), serve as a signal peptide directing secretion. A propeptide spanning residues 21-74 (NEGVNQEQMKEVIQNEFREDFLNEMAAMSLLQQLEAIESTLLEKEADRNSRQKR) is cleaved from the precursor. Disulfide bonds link Cys-75–Cys-90, Cys-82–Cys-95, and Cys-89–Cys-110.

The protein belongs to the neurotoxin 14 (magi-1) family. 06 (ICK-Trit) subfamily. In terms of tissue distribution, expressed by the venom gland.

The protein localises to the secreted. Its function is as follows. Ion channel inhibitor. This Trittame loki (Brush-footed trapdoor spider) protein is U16-barytoxin-Tl1c.